Reading from the N-terminus, the 318-residue chain is Transaldolase (318 aa).

Residue Lys-132 is the Schiff-base intermediate with substrate of the active site.

Belongs to the transaldolase family. Type 1 subfamily. As to quaternary structure, homodimer.

The protein resides in the cytoplasm. The catalysed reaction is D-sedoheptulose 7-phosphate + D-glyceraldehyde 3-phosphate = D-erythrose 4-phosphate + beta-D-fructose 6-phosphate. It participates in carbohydrate degradation; pentose phosphate pathway; D-glyceraldehyde 3-phosphate and beta-D-fructose 6-phosphate from D-ribose 5-phosphate and D-xylulose 5-phosphate (non-oxidative stage): step 2/3. Transaldolase is important for the balance of metabolites in the pentose-phosphate pathway. In Shewanella sp. (strain ANA-3), this protein is Transaldolase.